The sequence spans 354 residues: RNA 3'-terminal phosphate cyclase (354 aa).

ATP-binding positions include glutamine 100 and 290–293; that span reads HMGD. Histidine 316 acts as the Tele-AMP-histidine intermediate in catalysis.

It belongs to the RNA 3'-terminal cyclase family. Type 1 subfamily.

It is found in the cytoplasm. It carries out the reaction a 3'-end 3'-phospho-ribonucleotide-RNA + ATP = a 3'-end 2',3'-cyclophospho-ribonucleotide-RNA + AMP + diphosphate. Catalyzes the conversion of 3'-phosphate to a 2',3'-cyclic phosphodiester at the end of RNA. The mechanism of action of the enzyme occurs in 3 steps: (A) adenylation of the enzyme by ATP; (B) transfer of adenylate to an RNA-N3'P to produce RNA-N3'PP5'A; (C) and attack of the adjacent 2'-hydroxyl on the 3'-phosphorus in the diester linkage to produce the cyclic end product. The biological role of this enzyme is unknown but it is likely to function in some aspects of cellular RNA processing. The polypeptide is RNA 3'-terminal phosphate cyclase (Caldivirga maquilingensis (strain ATCC 700844 / DSM 13496 / JCM 10307 / IC-167)).